The primary structure comprises 450 residues: Chromosomal replication initiator protein DnaA (450 aa).

The tract at residues 1 to 76 is domain I, interacts with DnaA modulators; it reads MNLNDILKEL…KKILKQPVNI (76 aa). The interval 76 to 107 is domain II; it reads ISFTYEQEYQKQLEKTESINKDHSDIISKKNK. The interval 108–327 is domain III, AAA+ region; the sequence is KVNENTFENF…GSVSRLNFWS (220 aa). ATP-binding residues include glycine 151, glycine 153, lysine 154, and threonine 155. Positions 328–450 are domain IV, binds dsDNA; the sequence is QQNPEEKVIT…DILKNKILTK (123 aa).

This sequence belongs to the DnaA family. Oligomerizes as a right-handed, spiral filament on DNA at oriC.

The protein localises to the cytoplasm. Its subcellular location is the cell membrane. Functionally, plays an essential role in the initiation and regulation of chromosomal replication. ATP-DnaA binds to the origin of replication (oriC) to initiate formation of the DNA replication initiation complex once per cell cycle. Binds the DnaA box (a 9 base pair repeat at the origin) and separates the double-stranded (ds)DNA. Forms a right-handed helical filament on oriC DNA; dsDNA binds to the exterior of the filament while single-stranded (ss)DNA is stabiized in the filament's interior. The ATP-DnaA-oriC complex binds and stabilizes one strand of the AT-rich DNA unwinding element (DUE), permitting loading of DNA polymerase. After initiation quickly degrades to an ADP-DnaA complex that is not apt for DNA replication. Binds acidic phospholipids. The protein is Chromosomal replication initiator protein DnaA of Mycoplasma capricolum subsp. capricolum (strain California kid / ATCC 27343 / NCTC 10154).